A 438-amino-acid chain; its full sequence is 23S rRNA (uracil(1939)-C(5))-methyltransferase RlmD (438 aa).

Positions 11–69 (LQPESKHQQVLVEKLDHQGAGIAYLNKKPLFIDGTLPGEEVVTQLTESKSKFARGKLIK) constitute a TRAM domain. 4 residues coordinate [4Fe-4S] cluster: Cys-82, Cys-88, Cys-91, and Cys-169. S-adenosyl-L-methionine-binding residues include Gln-272, Phe-301, Asn-306, Glu-322, Asn-349, and Asp-370. Catalysis depends on Cys-396, which acts as the Nucleophile.

Belongs to the class I-like SAM-binding methyltransferase superfamily. RNA M5U methyltransferase family. RlmD subfamily.

It carries out the reaction uridine(1939) in 23S rRNA + S-adenosyl-L-methionine = 5-methyluridine(1939) in 23S rRNA + S-adenosyl-L-homocysteine + H(+). Catalyzes the formation of 5-methyl-uridine at position 1939 (m5U1939) in 23S rRNA. The polypeptide is 23S rRNA (uracil(1939)-C(5))-methyltransferase RlmD (Vibrio vulnificus (strain CMCP6)).